Consider the following 286-residue polypeptide: MKLAVYGKGGIGKSTTSCNISVALAKRGKKVLQIGCDPKHDSTFTLTGFLIPTIIDTLQEKDYHYEDVWAEDVIYKGYGGVDCVEAGGPPAGAGCGGYVVGETVKLLKELNAFDEYDVILFDVLGDVVCGGFAAPLNYADYCMIVTDNGFDALFAANRIAASVREKARTHPLRLAGLIGNRTAKRDLIEKYVDAVPMPILEVLPLIEDIRVSRVKGKTLFEMAESDPSLNYVCDYYLNIADQILANPEGVVPKDAADRDLFSLLSDFYLNPQQPKTAEEELDLMMV.

ATP contacts are provided by residues G10 to T15 and K39. Position 14 (S14) interacts with Mg(2+). Residues C95 and C129 each contribute to the [4Fe-4S] cluster site. N180–R181 lines the ATP pocket.

The protein belongs to the NifH/BchL/ChlL family. Homodimer. Protochlorophyllide reductase is composed of three subunits; ChlL, ChlN and ChlB. [4Fe-4S] cluster serves as cofactor.

It catalyses the reaction chlorophyllide a + oxidized 2[4Fe-4S]-[ferredoxin] + 2 ADP + 2 phosphate = protochlorophyllide a + reduced 2[4Fe-4S]-[ferredoxin] + 2 ATP + 2 H2O. The protein operates within porphyrin-containing compound metabolism; chlorophyll biosynthesis (light-independent). Its function is as follows. Component of the dark-operative protochlorophyllide reductase (DPOR) that uses Mg-ATP and reduced ferredoxin to reduce ring D of protochlorophyllide (Pchlide) to form chlorophyllide a (Chlide). This reaction is light-independent. The L component serves as a unique electron donor to the NB-component of the complex, and binds Mg-ATP. The chain is Light-independent protochlorophyllide reductase iron-sulfur ATP-binding protein from Leptolyngbya boryana (Plectonema boryanum).